Consider the following 328-residue polypeptide: MSQIVVCAMYKFVTLEDFEAMRQPLLDTMIKNNVKGTLLLANEGINGTVAGTRESIDNLLAYLKADPRLVDIDYKESYHQEMPFYRSKVKLKKEIVTLGIDEIDPNKICGKYVEPKDWNDLISDPETVLIDTRNEYEIEIGTFKNAINPHTENFREFPQYVDENLDPKKHKKVAMFCTGGIRCEKSTALLKAKGFDEVYHLKGGILKYLEEVPKEKSMWQGECFVFDSRVAVNHDLEKGNYDQCFACRMPITEDDKKRPEYVKGISCHHCYDKVTEKQKARFAEREKQSQLAAEKGFSHVGDEAKKLAQLNKQKKQQAKEAARKKAQQ.

In terms of domain architecture, Rhodanese spans 123-217 (SDPETVLIDT…YLEEVPKEKS (95 aa)). C177 (cysteine persulfide intermediate) is an active-site residue. The disordered stretch occupies residues 304-328 (AKKLAQLNKQKKQQAKEAARKKAQQ). Over residues 317–328 (QAKEAARKKAQQ) the composition is skewed to basic and acidic residues.

The protein belongs to the TrhO family.

It carries out the reaction uridine(34) in tRNA + AH2 + O2 = 5-hydroxyuridine(34) in tRNA + A + H2O. Functionally, catalyzes oxygen-dependent 5-hydroxyuridine (ho5U) modification at position 34 in tRNAs. This is tRNA uridine(34) hydroxylase from Francisella tularensis subsp. holarctica (strain LVS).